The sequence spans 309 residues: Large ribosomal subunit protein uL22m (309 aa).

A mitochondrion-targeting transit peptide spans 1–25 (MNFHTARISQVGVISRALLSSVSRR). Residues 40–63 (SLFGSITENKPKEGKNRGDEDAGS) form a disordered region. Residues 48-59 (NKPKEGKNRGDE) are compositionally biased toward basic and acidic residues.

This sequence belongs to the universal ribosomal protein uL22 family. Component of the mitochondrial large ribosomal subunit (mt-LSU). Mature yeast 74S mitochondrial ribosomes consist of a small (37S) and a large (54S) subunit. The 37S small subunit contains a 15S ribosomal RNA (15S mt-rRNA) and 34 different proteins. The 54S large subunit contains a 21S rRNA (21S mt-rRNA) and 46 different proteins. uL22m forms the wall of the exit tunnel.

It is found in the mitochondrion. Its function is as follows. Component of the mitochondrial ribosome (mitoribosome), a dedicated translation machinery responsible for the synthesis of mitochondrial genome-encoded proteins, including at least some of the essential transmembrane subunits of the mitochondrial respiratory chain. The mitoribosomes are attached to the mitochondrial inner membrane and translation products are cotranslationally integrated into the membrane. This chain is Large ribosomal subunit protein uL22m (MRPL22), found in Saccharomyces cerevisiae (strain ATCC 204508 / S288c) (Baker's yeast).